The primary structure comprises 155 residues: Small ribosomal subunit protein uS7c (155 aa).

This sequence belongs to the universal ribosomal protein uS7 family. As to quaternary structure, part of the 30S ribosomal subunit.

It is found in the plastid. The protein resides in the chloroplast. Its function is as follows. One of the primary rRNA binding proteins, it binds directly to 16S rRNA where it nucleates assembly of the head domain of the 30S subunit. The sequence is that of Small ribosomal subunit protein uS7c (rps7) from Schisandra chinensis (Chinese magnolia vine).